The chain runs to 588 residues: MGKKSRVKTQKSGTGATASVSPKETLNLTSELLQKCSSPAPGPGKEWEEYVQIRSLVEKIRKKQKGLSVTFDGKREDYFPDLMKWASENGASVEGFEMVNFKEEGFGLRATRDIKAEELFLWVPRKLLMTVESAKNSVLGPLYSQDRILQAMGNITLAFHLLCERADPNSFWQPYIQTLPSEYDTPLYFEEDEVRDLQSTQAIHDVFSQYKNTARQYAYFYKVIQTHPHANKLPLKDAFTYEDYRWAVSSVMTRQNQIPTEDGSRVTLALIPLWDMCNHTNGLITTGYNLEDDRCECVALRDFRAGEQIYIFYGTRSNAEFVIHSGFFFDNNSHDRVKIKLGVSKSDRLYAMKAEVLARAGIPTSSVFALHYTDPPVSAQLLAFLRVFCMTEEELKEHLLGDNALDRIFTLGNSEYPVSWDNEVRLWTFLEDRASLLLKTYKTTIEEDKSFLRNHDLSVRATMAIKLRLGEKEILEKAVKSAAANREHYRKQMQAGAPLPRCEESGTAGARLPLALRDLEAEASVQEALSLTEAVGRAKAVENGLVNGENSIPNGTRSGKENFNQEGSERATEGTKESSSDSTAGARE.

A disordered region spans residues 1–25 (MGKKSRVKTQKSGTGATASVSPKET). The segment covering 10-25 (QKSGTGATASVSPKET) has biased composition (polar residues). S-adenosyl-L-methionine-binding positions include arginine 75, 104–106 (EGF), arginine 254, 275–279 (DMCNH), and 325–327 (SGF). In terms of domain architecture, SET spans 94 to 314 (EGFEMVNFKE…AGEQIYIFYG (221 aa)). Residues 546-588 (VNGENSIPNGTRSGKENFNQEGSERATEGTKESSSDSTAGARE) are disordered. The segment covering 548-566 (GENSIPNGTRSGKENFNQE) has biased composition (polar residues). Positions 567-579 (GSERATEGTKESS) are enriched in basic and acidic residues.

Belongs to the class V-like SAM-binding methyltransferase superfamily. SETD3 actin-histidine methyltransferase family. In terms of assembly, interacts with MYOD1. In terms of processing, phosphorylated by GSK3B, which is required for recognition by the SCF(FBXW7) complex and subsequent degradation. Post-translationally, ubiquitinated by the SCF(FBXW7) complex following phosphorylation by GSK3B, leading to its degradation by the proteasome.

The protein localises to the cytoplasm. It is found in the nucleus. The catalysed reaction is L-histidyl-[protein] + S-adenosyl-L-methionine = N(tele)-methyl-L-histidyl-[protein] + S-adenosyl-L-homocysteine + H(+). Protein-histidine N-methyltransferase that specifically mediates 3-methylhistidine (tele-methylhistidine) methylation of actin at 'His-73'. Histidine methylation of actin is required for smooth muscle contraction of the laboring uterus during delivery. Does not have protein-lysine N-methyltransferase activity and probably only catalyzes histidine methylation of actin. The polypeptide is Actin-histidine N-methyltransferase (Canis lupus familiaris (Dog)).